The chain runs to 269 residues: Regulatory protein RecX (269 aa).

This sequence belongs to the RecX family.

The protein resides in the cytoplasm. Its function is as follows. Modulates RecA activity. The polypeptide is Regulatory protein RecX (Geobacillus kaustophilus (strain HTA426)).